A 252-amino-acid chain; its full sequence is Eukaryotic translation initiation factor 3 subunit K (252 aa).

The PCI domain maps to 46 to 225; it reads FDCYANLALL…VKVPTNKENE (180 aa).

It belongs to the eIF-3 subunit K family. In terms of assembly, component of the eukaryotic translation initiation factor 3 (eIF-3) complex.

It is found in the cytoplasm. Its function is as follows. Component of the eukaryotic translation initiation factor 3 (eIF-3) complex, which is involved in protein synthesis of a specialized repertoire of mRNAs and, together with other initiation factors, stimulates binding of mRNA and methionyl-tRNAi to the 40S ribosome. The eIF-3 complex specifically targets and initiates translation of a subset of mRNAs involved in cell proliferation. This chain is Eukaryotic translation initiation factor 3 subunit K, found in Aspergillus terreus (strain NIH 2624 / FGSC A1156).